Reading from the N-terminus, the 320-residue chain is ATP phosphoribosyltransferase (320 aa).

Belongs to the ATP phosphoribosyltransferase family. Long subfamily. The cofactor is Mg(2+).

Its subcellular location is the cytoplasm. The enzyme catalyses 1-(5-phospho-beta-D-ribosyl)-ATP + diphosphate = 5-phospho-alpha-D-ribose 1-diphosphate + ATP. Its pathway is amino-acid biosynthesis; L-histidine biosynthesis; L-histidine from 5-phospho-alpha-D-ribose 1-diphosphate: step 1/9. Its activity is regulated as follows. Feedback inhibited by histidine. Catalyzes the condensation of ATP and 5-phosphoribose 1-diphosphate to form N'-(5'-phosphoribosyl)-ATP (PR-ATP). Has a crucial role in the pathway because the rate of histidine biosynthesis seems to be controlled primarily by regulation of HisG enzymatic activity. The protein is ATP phosphoribosyltransferase (hisG) of Caulobacter vibrioides (strain ATCC 19089 / CIP 103742 / CB 15) (Caulobacter crescentus).